A 125-amino-acid chain; its full sequence is Large ribosomal subunit protein bL12 (125 aa).

This sequence belongs to the bacterial ribosomal protein bL12 family. In terms of assembly, homodimer. Part of the ribosomal stalk of the 50S ribosomal subunit. Forms a multimeric L10(L12)X complex, where L10 forms an elongated spine to which 2 to 4 L12 dimers bind in a sequential fashion. Binds GTP-bound translation factors.

Forms part of the ribosomal stalk which helps the ribosome interact with GTP-bound translation factors. Is thus essential for accurate translation. This chain is Large ribosomal subunit protein bL12, found in Paraburkholderia phymatum (strain DSM 17167 / CIP 108236 / LMG 21445 / STM815) (Burkholderia phymatum).